A 288-amino-acid polypeptide reads, in one-letter code: Acetyl-coenzyme A carboxylase carboxyl transferase subunit beta (288 aa).

A CoA carboxyltransferase N-terminal domain is found at 34 to 288 (LFAKCPACKH…HLVAFHGGGQ (255 aa)). Positions 38, 41, 56, and 59 each coordinate Zn(2+). A C4-type zinc finger spans residues 38–59 (CPACKHMIYKKDLGLAKICPTC).

It belongs to the AccD/PCCB family. As to quaternary structure, acetyl-CoA carboxylase is a heterohexamer composed of biotin carboxyl carrier protein (AccB), biotin carboxylase (AccC) and two subunits each of ACCase subunit alpha (AccA) and ACCase subunit beta (AccD). It depends on Zn(2+) as a cofactor.

It localises to the cytoplasm. It carries out the reaction N(6)-carboxybiotinyl-L-lysyl-[protein] + acetyl-CoA = N(6)-biotinyl-L-lysyl-[protein] + malonyl-CoA. It functions in the pathway lipid metabolism; malonyl-CoA biosynthesis; malonyl-CoA from acetyl-CoA: step 1/1. Component of the acetyl coenzyme A carboxylase (ACC) complex. Biotin carboxylase (BC) catalyzes the carboxylation of biotin on its carrier protein (BCCP) and then the CO(2) group is transferred by the transcarboxylase to acetyl-CoA to form malonyl-CoA. The protein is Acetyl-coenzyme A carboxylase carboxyl transferase subunit beta of Streptococcus dysgalactiae subsp. equisimilis (strain GGS_124).